The chain runs to 252 residues: Transcriptional regulatory protein HptR (252 aa).

The Response regulatory domain maps to 3–118 (KVVICDDERI…QLEVILGRLV (116 aa)). A 4-aspartylphosphate modification is found at D55. The 98-residue stretch at 153–250 (NQIVDQIKQS…QMAPSDYCKQ (98 aa)) folds into the HTH araC/xylS-type domain. 2 DNA-binding regions (H-T-H motif) span residues 170 to 191 (SDLI…KDHV) and 217 to 240 (HYEI…KKYL).

Phosphorylated by HptS.

The protein localises to the cytoplasm. Functionally, member of the two-component regulatory system HptS/HptR that regulates genes involved in hexose phosphate transport system in response to changes in extracellular phosphate sources. Activates uhpT expression to facilitate glucose-6-phosphate/G6P utilization by directly binding to its promoter. Antagonizes CcpA-dependent transcription of a subset of CcpA-regulated genes involved in antibiotic susceptibility. This is Transcriptional regulatory protein HptR (hptR) from Staphylococcus aureus (strain bovine RF122 / ET3-1).